A 76-amino-acid chain; its full sequence is MSQTLAAVEGSLGSIGYGLAAIGPGVGVGIIFGNGTQAMARQPEAAGLIRANQILGFAFCEALALIGLVMPFVYGY.

The next 2 membrane-spanning stretches (helical) occupy residues 12–32 and 54–74; these read LGSI…GIIF and ILGF…PFVY.

This sequence belongs to the ATPase C chain family. In terms of assembly, F-type ATPases have 2 components, F(1) - the catalytic core - and F(0) - the membrane proton channel. F(1) has five subunits: alpha(3), beta(3), gamma(1), delta(1), epsilon(1). F(0) has three main subunits: a(1), b(2) and c(10-14). The alpha and beta chains form an alternating ring which encloses part of the gamma chain. F(1) is attached to F(0) by a central stalk formed by the gamma and epsilon chains, while a peripheral stalk is formed by the delta and b chains.

It is found in the cell membrane. In terms of biological role, f(1)F(0) ATP synthase produces ATP from ADP in the presence of a proton or sodium gradient. F-type ATPases consist of two structural domains, F(1) containing the extramembraneous catalytic core and F(0) containing the membrane proton channel, linked together by a central stalk and a peripheral stalk. During catalysis, ATP synthesis in the catalytic domain of F(1) is coupled via a rotary mechanism of the central stalk subunits to proton translocation. Its function is as follows. Key component of the F(0) channel; it plays a direct role in translocation across the membrane. A homomeric c-ring of between 10-14 subunits forms the central stalk rotor element with the F(1) delta and epsilon subunits. This Streptomyces coelicolor (strain ATCC BAA-471 / A3(2) / M145) protein is ATP synthase subunit c.